A 630-amino-acid chain; its full sequence is Chaperone protein HtpG (630 aa).

The segment at 1-338 is a; substrate-binding; it reads MTVEANKETL…SNDLSLNVSR (338 aa). Positions 339–555 are b; that stretch reads EILQNDSTVE…QFDMGAQMKK (217 aa). The interval 556–630 is c; it reads IMEAAGQKVP…LNRLLLELAN (75 aa).

The protein belongs to the heat shock protein 90 family. In terms of assembly, homodimer.

It localises to the cytoplasm. Molecular chaperone. Has ATPase activity. The protein is Chaperone protein HtpG of Marinobacter nauticus (strain ATCC 700491 / DSM 11845 / VT8) (Marinobacter aquaeolei).